Here is a 648-residue protein sequence, read N- to C-terminus: Sodium/nucleoside cotransporter 1 (648 aa).

Residues 1-83 are Cytoplasmic-facing; the sequence is MADDTPRQRE…LCREHWQLFE (83 aa). A helical transmembrane segment spans residues 84–104; it reads WISKGLLSTAYIGFLIVACLL. Residues 105–108 lie on the Extracellular side of the membrane; it reads DFPR. The chain crosses the membrane as a helical span at residues 109–129; sequence ALALFVITCVVLVFLAYNLLK. The Cytoplasmic segment spans residues 130 to 147; that stretch reads RLLGSKLKKCVKFQGHSC. Residues 148–168 traverse the membrane as a helical segment; that stretch reads LSLWLKRGLALAAGLGVILWL. Over 169–175 the chain is Extracellular; it reads SLDTAQR. The chain crosses the membrane as a helical span at residues 176-196; the sequence is PEQLVSFAGICVFLVLLFAGS. Over 197-201 the chain is Cytoplasmic; sequence KHHRA. The helical transmembrane segment at 202 to 222 threads the bilayer; the sequence is VSWRAVSWGLGLQFVLGLFVI. At 223–265 the chain is on the extracellular side; that stretch reads RTEPGFVAFQWLGDQIRVFLSYTEAGSSFVFGEALVKDVFAFQ. The chain crosses the membrane as a helical span at residues 266–286; that stretch reads VLPIIVFFSCVMSVLYYLGLM. Over 287 to 294 the chain is Cytoplasmic; the sequence is QWVILKIA. A helical transmembrane segment spans residues 295–318; it reads WLMQVTMGTSATETLSVAGNIFVS. The Extracellular portion of the chain corresponds to 319-339; the sequence is QTEAPLLIRPYLADMTLSEVH. A helical transmembrane segment spans residues 340 to 360; sequence VVMTGGYATIAGSLLGAYISF. Residue glycine 361 is a topological domain, cytoplasmic. Residues 362-380 form a helical membrane-spanning segment; sequence IDASSLIAASVMAAPCALA. At 381–427 the chain is on the extracellular side; it reads LSKLVYPEVEESKFRSEEGVKLTYGDAQNLVEAASAGAAISVKVVAN. The chain crosses the membrane as a helical span at residues 428–448; that stretch reads IAANLIAFLAVLAFINAALSW. The Cytoplasmic segment spans residues 449-470; sequence LGDMVDIQGLSFQLICSYVLRP. The chain crosses the membrane as a helical span at residues 471-491; the sequence is VAFLMGVAWEDCPVVAELLGI. The Extracellular segment spans residues 492-531; the sequence is KLFLNEFVAYQELSQYKQRRLAGAEEWLGDKKQWISVRAE. A helical membrane pass occupies residues 532-552; the sequence is ILTTYALCGFANFSSIGIMLG. The Cytoplasmic portion of the chain corresponds to 553-571; it reads GLTSMVPQRRSDFSQIVLR. A helical membrane pass occupies residues 572–592; sequence ALITGAFVSLVNACVAGILYV. Residues 593 to 648 lie on the Extracellular side of the membrane; sequence PRGVEVDCMSLLNQTVSSSSFEVYLCCRQVFQNTSLEFGQEALHNCCRFYNHTVCT. Residues asparagine 605, asparagine 625, and asparagine 643 are each glycosylated (N-linked (GlcNAc...) asparagine).

It belongs to the concentrative nucleoside transporter (CNT) (TC 2.A.41) family. Post-translationally, N-glycosylated. N-glycosylation is required for localization to the plasma membrane and the transporter activity.

The protein localises to the cell membrane. It localises to the apical cell membrane. The catalysed reaction is uridine(out) + Na(+)(out) = uridine(in) + Na(+)(in). It catalyses the reaction thymidine(out) + Na(+)(out) = thymidine(in) + Na(+)(in). It carries out the reaction cytidine(out) + Na(+)(out) = cytidine(in) + Na(+)(in). The enzyme catalyses adenosine(out) + Na(+)(out) = adenosine(in) + Na(+)(in). Its activity is regulated as follows. Due to its high apparent affinity but slow transport, adenosine could act as a negative regulator of pyrimidine transport under some conditions. Its function is as follows. Sodium and pyrimidine nucleoside symporter of the plasma membrane that imports uridine, thymidine and cytidine into cells by coupling their transport to the transmembrane sodium electrochemical gradient. Also transports adenosine, an atypical substrate transported with high apparent affinity, but low maximum velocity. Therefore, exhibits the transport characteristics of the nucleoside transport system cit or N2 subtype (N2/cit). Involved in renal nucleoside (re)absorption. In Mus musculus (Mouse), this protein is Sodium/nucleoside cotransporter 1.